A 293-amino-acid polypeptide reads, in one-letter code: Ribonuclease Z (293 aa).

The Zn(2+) site is built by histidine 60, histidine 62, aspartate 64, histidine 65, histidine 132, aspartate 200, and histidine 256. Aspartate 64 serves as the catalytic Proton acceptor.

Belongs to the RNase Z family. In terms of assembly, homodimer. Requires Zn(2+) as cofactor.

It carries out the reaction Endonucleolytic cleavage of RNA, removing extra 3' nucleotides from tRNA precursor, generating 3' termini of tRNAs. A 3'-hydroxy group is left at the tRNA terminus and a 5'-phosphoryl group is left at the trailer molecule.. Zinc phosphodiesterase, which displays some tRNA 3'-processing endonuclease activity. Probably involved in tRNA maturation, by removing a 3'-trailer from precursor tRNA. The protein is Ribonuclease Z of Sulfurisphaera tokodaii (strain DSM 16993 / JCM 10545 / NBRC 100140 / 7) (Sulfolobus tokodaii).